The following is a 454-amino-acid chain: Lamina-associated polypeptide 2, isoforms beta/gamma (454 aa).

The interval 1 to 410 is nucleoplasmic; sequence MPEFLEDPSV…KSEKTKKGRS (410 aa). The region spanning 5–48 is the LEM-like domain; it reads LEDPSVLTKDKLKSELVANNVTLPAGEQRKDVYVQLYLQHLTAR. 2 disordered regions span residues 47–117 and 149–265; these read ARNR…ELTN and LREQ…VETS. Positions 49 to 108 are linker; that stretch reads NRPPLPAGTNSKGPPDFSSDEEREPTPVLGSGAAAAGRSRAAVGRKATKKTDKPRQEDKD. The residue at position 57 (threonine 57) is a Phosphothreonine. Phosphoserine is present on residues serine 59, serine 66, and serine 67. Threonine 74 bears the Phosphothreonine mark. A compositionally biased stretch (low complexity) spans 78–93; the sequence is GSGAAAAGRSRAAVGR. At serine 79 the chain carries Phosphoserine. Omega-N-methylarginine occurs at positions 86 and 88. Residues 97–106 are compositionally biased toward basic and acidic residues; sequence KKTDKPRQED. The span at 107–117 shows a compositional bias: acidic residues; the sequence is KDDLDVTELTN. In terms of domain architecture, LEM spans 109 to 153; that stretch reads DLDVTELTNEDLLDQLVKYGVNPGPIVGTTRKLYEKKLLKLREQG. The interval 138–243 is NAKAP95-binding N; sequence TRKLYEKKLL…TSGSSKGGPL (106 aa). A Phosphothreonine modification is found at threonine 154. Polar residues predominate over residues 155–178; that stretch reads ESRSSTPLPTISSSAENTRQNGSN. Serine 156 and serine 159 each carry phosphoserine. A phosphothreonine mark is found at threonine 160 and threonine 164. A phosphoserine mark is found at serine 166, serine 168, serine 177, serine 180, serine 184, and serine 190. Residues 179 to 203 show a composition bias toward basic and acidic residues; that stretch reads DSDRYSDNEEDSKIELKLEKREPLK. Lysine 207 is modified (N6-acetyllysine). Phosphothreonine is present on threonine 211. Residues 220–237 show a composition bias toward polar residues; the sequence is NQSYSQAGITETEWTSGS. A phosphoserine mark is found at serine 222, serine 224, serine 250, serine 254, serine 265, serine 292, and serine 306. The segment at 299-371 is binds lamins B; it reads TGNFKHASPI…SCRRPIKGAA (73 aa). Residues 300–374 are NAKAP95-binding C; the sequence is GNFKHASPIL…RPIKGAAGRP (75 aa). Phosphothreonine is present on threonine 312. A Phosphoserine modification is found at serine 315. Position 320 is a citrulline (arginine 320). Phosphoserine is present on residues serine 362, serine 378, and serine 385. Position 389 is an N6-acetyllysine (lysine 389). Lysine 401 participates in a covalent cross-link: Glycyl lysine isopeptide (Lys-Gly) (interchain with G-Cter in SUMO2). At serine 402 the chain carries Phosphoserine. The helical; Signal-anchor for type II membrane protein transmembrane segment at 411–434 threads the bilayer; sequence IPVWIKILLFVVVAVFLFLVYQAM. Residues 435 to 454 are Lumenal-facing; sequence ETNQVNPFSNFLHVDPRKSN.

It belongs to the LEM family. Interacts with LMNB1, LMNB2, BANF1, AKAP8L, GMCL and chromosomes. Isoform Zeta interacts with BANF1/BAF and may sequester it in the cytoplasm. Mitosis-specific phosphorylation specifically abolishes its binding to lamin B and chromosomes. In terms of processing, citrullinated by PADI4. Expressed in many tissues. Most abundant in adult thymus and fetal liver.

It is found in the nucleus inner membrane. Its subcellular location is the cytoplasm. Functionally, may help direct the assembly of the nuclear lamina and thereby help maintain the structural organization of the nuclear envelope. Possible receptor for attachment of lamin filaments to the inner nuclear membrane. May be involved in the control of initiation of DNA replication through its interaction with NAKAP95. Its function is as follows. Thymopoietin (TP) and Thymopentin (TP5) may play a role in T-cell development and function. TP5 is an immunomodulating pentapeptide. The chain is Lamina-associated polypeptide 2, isoforms beta/gamma (TMPO) from Homo sapiens (Human).